The sequence spans 237 residues: UPF0053 protein HI_0056 (237 aa).

Helical transmembrane passes span 12–32 (ISLVTLAALEIVLGIDNIIFI), 49–69 (ILGLALAMLTRILLLMSLAWI), 90–110 (ILLIGGLFLIIKSSGEIKEAI), 126–146 (YLGVLIQIAVLDIVFSLDSVI), 151–171 (MASHLPVMILAIMIAVGVMMF), 188–208 (ILALAFLVLVGISLIAESLDI), and 210–230 (IPKGYIYFAMGFSVVVEMINI).

Belongs to the UPF0053 family.

It is found in the cell membrane. This chain is UPF0053 protein HI_0056, found in Haemophilus influenzae (strain ATCC 51907 / DSM 11121 / KW20 / Rd).